A 57-amino-acid chain; its full sequence is Mambaquaretin-7 (57 aa).

The BPTI/Kunitz inhibitor domain occupies 5-55; that stretch reads CELIVAAGPCMFFISAFYYSKGANKCYPFTYSGCRGNANRFKTIEECRRTC. 3 cysteine pairs are disulfide-bonded: C5–C55, C14–C38, and C30–C51.

This sequence belongs to the venom Kunitz-type family. In terms of tissue distribution, expressed by the venom gland.

It localises to the secreted. Its function is as follows. The mixture of mambaquaretin-7 and mambaquaretin-8 interacts with vasopressin V2 receptor (V2R/AVPR2), probably in a selective manner. This mixture inhibits vasopressin binding human V2R in the nanomolar range (Ki=3.14 nM), and also potently inhibits vasopressin-induced cAMP production (IC(50)=58 nM). In vivo, intraperitoneal injection of this protein into rats increases diuresis, without any loss of electrolytes. The chain is Mambaquaretin-7 from Dendroaspis polylepis polylepis (Black mamba).